Reading from the N-terminus, the 197-residue chain is dITP/XTP pyrophosphatase (197 aa).

8–13 (TGNPGK) contacts substrate. The Mg(2+) site is built by Glu40 and Asp69. The active-site Proton acceptor is the Asp69. Residues Ser70, 154-157 (FGYD), Lys177, and 182-183 (HR) contribute to the substrate site.

Belongs to the HAM1 NTPase family. In terms of assembly, homodimer. It depends on Mg(2+) as a cofactor.

It carries out the reaction XTP + H2O = XMP + diphosphate + H(+). The enzyme catalyses dITP + H2O = dIMP + diphosphate + H(+). It catalyses the reaction ITP + H2O = IMP + diphosphate + H(+). Functionally, pyrophosphatase that catalyzes the hydrolysis of nucleoside triphosphates to their monophosphate derivatives, with a high preference for the non-canonical purine nucleotides XTP (xanthosine triphosphate), dITP (deoxyinosine triphosphate) and ITP. Seems to function as a house-cleaning enzyme that removes non-canonical purine nucleotides from the nucleotide pool, thus preventing their incorporation into DNA/RNA and avoiding chromosomal lesions. The polypeptide is dITP/XTP pyrophosphatase (Photorhabdus laumondii subsp. laumondii (strain DSM 15139 / CIP 105565 / TT01) (Photorhabdus luminescens subsp. laumondii)).